Consider the following 402-residue polypeptide: S-adenosylmethionine synthase (402 aa).

Residue His15 participates in ATP binding. Asp17 lines the Mg(2+) pocket. Glu43 provides a ligand contact to K(+). L-methionine is bound by residues Glu56 and Gln99. A flexible loop region spans residues Gln99–Thr109. ATP contacts are provided by residues Asp174–Lys176, Arg247–Phe248, Asp256, Arg262–Lys263, Ala279, and Lys283. Residue Asp256 participates in L-methionine binding. Lys287 is an L-methionine binding site.

The protein belongs to the AdoMet synthase family. In terms of assembly, homotetramer; dimer of dimers. Mg(2+) serves as cofactor. Requires K(+) as cofactor.

Its subcellular location is the cytoplasm. The catalysed reaction is L-methionine + ATP + H2O = S-adenosyl-L-methionine + phosphate + diphosphate. The protein operates within amino-acid biosynthesis; S-adenosyl-L-methionine biosynthesis; S-adenosyl-L-methionine from L-methionine: step 1/1. Catalyzes the formation of S-adenosylmethionine (AdoMet) from methionine and ATP. The overall synthetic reaction is composed of two sequential steps, AdoMet formation and the subsequent tripolyphosphate hydrolysis which occurs prior to release of AdoMet from the enzyme. This Streptomyces avermitilis (strain ATCC 31267 / DSM 46492 / JCM 5070 / NBRC 14893 / NCIMB 12804 / NRRL 8165 / MA-4680) protein is S-adenosylmethionine synthase.